We begin with the raw amino-acid sequence, 307 residues long: Cyclin-dependent kinase 5 activator 1 (307 aa).

Residue G2 is the site of N-myristoyl glycine attachment. Phosphoserine; by CDK5 is present on S8. Residues 97 to 133 (TFAQPPPAQPPAPPASQLSGSQTGVSSSVKKAPHPAI) are disordered. Pro residues predominate over residues 100 to 110 (QPPPAQPPAPP). Residues 112-125 (SQLSGSQTGVSSSV) show a composition bias toward polar residues. Residue T138 is modified to Phosphothreonine; by CDK5.

The protein belongs to the cyclin-dependent kinase 5 activator family. As to quaternary structure, heterodimer composed of a catalytic subunit CDK5 and a regulatory subunit CDK5R1 (p25) and macromolecular complex composed of at least CDK5, CDK5R1 (p35) and CDK5RAP1 or CDK5RAP2 or CDK5RAP3. Only the heterodimer shows kinase activity. Interacts with EPHA4 and NGEF; may mediate the activation of NGEF by EPHA4. Interacts with RASGRF2. The complex p35/CDK5 interacts with CLOCK. Post-translationally, the p35 form is proteolytically cleaved by calpain, giving rise to the p25 form. P35 has a 5 to 10 fold shorter half-life compared to p25. The conversion results in deregulation of the CDK5 kinase: p25/CDK5 kinase displays an increased and altered tau phosphorylation in comparison to the p35/CDK5 kinase in vivo. Myristoylated. A proper myristoylation signal is essential for the proper distribution of p35. In terms of processing, phosphorylation at Ser-8 and Thr-138 by CDK5 prevents calpain-mediated proteolysis. Post-translationally, ubiquitinated, leading to its degradation: degradation of p35 by proteasome results in down-regulation of CDK5 activity. During this process, CDK5 phosphorylates p35 and induces its ubiquitination and subsequent degradation. Ubiquitinated by the CRL2(FEM1B) complex, which recognizes the -Gly-Leu-Asp-Arg C-degron at the C-terminus, leading to its degradation. In terms of tissue distribution, brain and neuron specific.

The protein resides in the cell membrane. It localises to the cell projection. Its subcellular location is the neuron projection. The protein localises to the nucleus. It is found in the cytoplasm. The protein resides in the perinuclear region. It localises to the perikaryon. Functionally, p35 is a neuron specific activator of CDK5. The complex p35/CDK5 is required for neurite outgrowth and cortical lamination. Involved in dendritic spine morphogenesis by mediating the EFNA1-EPHA4 signaling. Activator of TPKII. The complex p35/CDK5 participates in the regulation of the circadian clock by modulating the function of CLOCK protein: phosphorylates CLOCK at 'Thr-451' and 'Thr-461' and regulates the transcriptional activity of the CLOCK-BMAL1 heterodimer in association with altered stability and subcellular distribution. The sequence is that of Cyclin-dependent kinase 5 activator 1 (Cdk5r1) from Rattus norvegicus (Rat).